A 228-amino-acid polypeptide reads, in one-letter code: Ribosomal RNA small subunit methyltransferase G (228 aa).

Residues Gly89, Leu94, 140–141 (VE), and Arg159 contribute to the S-adenosyl-L-methionine site.

The protein belongs to the methyltransferase superfamily. RNA methyltransferase RsmG family.

Its subcellular location is the cytoplasm. The enzyme catalyses guanosine(527) in 16S rRNA + S-adenosyl-L-methionine = N(7)-methylguanosine(527) in 16S rRNA + S-adenosyl-L-homocysteine. In terms of biological role, specifically methylates the N7 position of guanine in position 527 of 16S rRNA. The sequence is that of Ribosomal RNA small subunit methyltransferase G from Burkholderia lata (strain ATCC 17760 / DSM 23089 / LMG 22485 / NCIMB 9086 / R18194 / 383).